The following is a 450-amino-acid chain: Membrane-bound lytic murein transglycosylase F 2 (450 aa).

Residues 1–20 (MRTWIAILAVVLVLLLNACT) form the signal peptide. A non-LT domain region spans residues 21–261 (DGPEDGPRLE…AMENRYYTYV (241 aa)). An LT domain region spans residues 262-450 (GEFDFVDLRA…YRDVIRQAFE (189 aa)). Glutamate 308 is a catalytic residue.

This sequence in the N-terminal section; belongs to the bacterial solute-binding protein 3 family. In the C-terminal section; belongs to the transglycosylase Slt family.

It is found in the cell outer membrane. It carries out the reaction Exolytic cleavage of the (1-&gt;4)-beta-glycosidic linkage between N-acetylmuramic acid (MurNAc) and N-acetylglucosamine (GlcNAc) residues in peptidoglycan, from either the reducing or the non-reducing ends of the peptidoglycan chains, with concomitant formation of a 1,6-anhydrobond in the MurNAc residue.. Functionally, murein-degrading enzyme that degrades murein glycan strands and insoluble, high-molecular weight murein sacculi, with the concomitant formation of a 1,6-anhydromuramoyl product. Lytic transglycosylases (LTs) play an integral role in the metabolism of the peptidoglycan (PG) sacculus. Their lytic action creates space within the PG sacculus to allow for its expansion as well as for the insertion of various structures such as secretion systems and flagella. The protein is Membrane-bound lytic murein transglycosylase F 2 of Alkalilimnicola ehrlichii (strain ATCC BAA-1101 / DSM 17681 / MLHE-1).